A 616-amino-acid chain; its full sequence is Dihydroxy-acid dehydratase (616 aa).

Asp81 serves as a coordination point for Mg(2+). Residue Cys122 coordinates [2Fe-2S] cluster. Mg(2+) contacts are provided by Asp123 and Lys124. Lys124 is modified (N6-carboxylysine). Cys195 is a [2Fe-2S] cluster binding site. Glu491 serves as a coordination point for Mg(2+). Ser517 acts as the Proton acceptor in catalysis.

Belongs to the IlvD/Edd family. As to quaternary structure, homodimer. The cofactor is [2Fe-2S] cluster. Mg(2+) is required as a cofactor.

It catalyses the reaction (2R)-2,3-dihydroxy-3-methylbutanoate = 3-methyl-2-oxobutanoate + H2O. The enzyme catalyses (2R,3R)-2,3-dihydroxy-3-methylpentanoate = (S)-3-methyl-2-oxopentanoate + H2O. It participates in amino-acid biosynthesis; L-isoleucine biosynthesis; L-isoleucine from 2-oxobutanoate: step 3/4. It functions in the pathway amino-acid biosynthesis; L-valine biosynthesis; L-valine from pyruvate: step 3/4. Functions in the biosynthesis of branched-chain amino acids. Catalyzes the dehydration of (2R,3R)-2,3-dihydroxy-3-methylpentanoate (2,3-dihydroxy-3-methylvalerate) into 2-oxo-3-methylpentanoate (2-oxo-3-methylvalerate) and of (2R)-2,3-dihydroxy-3-methylbutanoate (2,3-dihydroxyisovalerate) into 2-oxo-3-methylbutanoate (2-oxoisovalerate), the penultimate precursor to L-isoleucine and L-valine, respectively. The sequence is that of Dihydroxy-acid dehydratase from Serratia proteamaculans (strain 568).